The sequence spans 195 residues: Peptidyl-tRNA hydrolase (195 aa).

Position 17 (Tyr-17) interacts with tRNA. The active-site Proton acceptor is His-22. TRNA contacts are provided by Tyr-68, Asn-70, and Asn-116.

The protein belongs to the PTH family. Monomer.

The protein localises to the cytoplasm. It catalyses the reaction an N-acyl-L-alpha-aminoacyl-tRNA + H2O = an N-acyl-L-amino acid + a tRNA + H(+). In terms of biological role, hydrolyzes ribosome-free peptidyl-tRNAs (with 1 or more amino acids incorporated), which drop off the ribosome during protein synthesis, or as a result of ribosome stalling. Its function is as follows. Catalyzes the release of premature peptidyl moieties from peptidyl-tRNA molecules trapped in stalled 50S ribosomal subunits, and thus maintains levels of free tRNAs and 50S ribosomes. The sequence is that of Peptidyl-tRNA hydrolase from Shewanella oneidensis (strain ATCC 700550 / JCM 31522 / CIP 106686 / LMG 19005 / NCIMB 14063 / MR-1).